Reading from the N-terminus, the 217-residue chain is Large ribosomal subunit protein uL1 (217 aa).

The protein belongs to the universal ribosomal protein uL1 family. In terms of assembly, part of the 50S ribosomal subunit.

Its function is as follows. Binds directly to 23S rRNA. The L1 stalk is quite mobile in the ribosome, and is involved in E site tRNA release. In terms of biological role, protein L1 is also a translational repressor protein, it controls the translation of the L11 operon by binding to its mRNA. This is Large ribosomal subunit protein uL1 from Wolbachia pipientis wMel.